The chain runs to 272 residues: HMP-PP phosphatase (272 aa).

D8 functions as the Nucleophile in the catalytic mechanism. Residues D8, D10, and D212 each contribute to the Mg(2+) site.

The protein belongs to the HAD-like hydrolase superfamily. Cof family. Mg(2+) is required as a cofactor.

The enzyme catalyses 4-amino-2-methyl-5-(diphosphooxymethyl)pyrimidine + H2O = 4-amino-2-methyl-5-(phosphooxymethyl)pyrimidine + phosphate + H(+). In terms of biological role, catalyzes the hydrolysis of 4-amino-2-methyl-5-hydroxymethylpyrimidine pyrophosphate (HMP-PP) to 4-amino-2-methyl-5-hydroxymethylpyrimidine phosphate (HMP-P). The chain is HMP-PP phosphatase from Escherichia coli O81 (strain ED1a).